The sequence spans 158 residues: Endoribonuclease YbeY (158 aa).

H118, H122, and H128 together coordinate Zn(2+).

It belongs to the endoribonuclease YbeY family. Zn(2+) is required as a cofactor.

The protein resides in the cytoplasm. Its function is as follows. Single strand-specific metallo-endoribonuclease involved in late-stage 70S ribosome quality control and in maturation of the 3' terminus of the 16S rRNA. This chain is Endoribonuclease YbeY, found in Bartonella bacilliformis (strain ATCC 35685 / KC583 / Herrer 020/F12,63).